A 357-amino-acid polypeptide reads, in one-letter code: Holliday junction branch migration complex subunit RuvB (357 aa).

A compositionally biased stretch (polar residues) spans 1-10 (MAIQSDSLSS). The tract at residues 1–30 (MAIQSDSLSSRPDAPRLVAPAPASPNEESI) is disordered. The tract at residues 5–195 (SDSLSSRPDA…FGIVSRLEFY (191 aa)) is large ATPase domain (RuvB-L). ATP-binding positions include L34, R35, G76, K79, T80, T81, 142 to 144 (EDF), R185, Y195, and R232. T80 is a Mg(2+) binding site. The tract at residues 196-266 (NTDDLAHIVT…AANQALAMLE (71 aa)) is small ATPAse domain (RuvB-S). Positions 269–357 (PQGLDLMDRK…QPSSGDLFGA (89 aa)) are head domain (RuvB-H). Residues R305, R324, and R329 each contribute to the DNA site.

It belongs to the RuvB family. In terms of assembly, homohexamer. Forms an RuvA(8)-RuvB(12)-Holliday junction (HJ) complex. HJ DNA is sandwiched between 2 RuvA tetramers; dsDNA enters through RuvA and exits via RuvB. An RuvB hexamer assembles on each DNA strand where it exits the tetramer. Each RuvB hexamer is contacted by two RuvA subunits (via domain III) on 2 adjacent RuvB subunits; this complex drives branch migration. In the full resolvosome a probable DNA-RuvA(4)-RuvB(12)-RuvC(2) complex forms which resolves the HJ.

The protein resides in the cytoplasm. The enzyme catalyses ATP + H2O = ADP + phosphate + H(+). Functionally, the RuvA-RuvB-RuvC complex processes Holliday junction (HJ) DNA during genetic recombination and DNA repair, while the RuvA-RuvB complex plays an important role in the rescue of blocked DNA replication forks via replication fork reversal (RFR). RuvA specifically binds to HJ cruciform DNA, conferring on it an open structure. The RuvB hexamer acts as an ATP-dependent pump, pulling dsDNA into and through the RuvAB complex. RuvB forms 2 homohexamers on either side of HJ DNA bound by 1 or 2 RuvA tetramers; 4 subunits per hexamer contact DNA at a time. Coordinated motions by a converter formed by DNA-disengaged RuvB subunits stimulates ATP hydrolysis and nucleotide exchange. Immobilization of the converter enables RuvB to convert the ATP-contained energy into a lever motion, pulling 2 nucleotides of DNA out of the RuvA tetramer per ATP hydrolyzed, thus driving DNA branch migration. The RuvB motors rotate together with the DNA substrate, which together with the progressing nucleotide cycle form the mechanistic basis for DNA recombination by continuous HJ branch migration. Branch migration allows RuvC to scan DNA until it finds its consensus sequence, where it cleaves and resolves cruciform DNA. This chain is Holliday junction branch migration complex subunit RuvB, found in Bordetella avium (strain 197N).